Here is a 108-residue protein sequence, read N- to C-terminus: Probable endonuclease 4 (108 aa).

Positions 2, 36, 49, 51, and 81 each coordinate Zn(2+).

The protein belongs to the AP endonuclease 2 family. Requires Zn(2+) as cofactor.

The enzyme catalyses Endonucleolytic cleavage to 5'-phosphooligonucleotide end-products.. In terms of biological role, endonuclease IV plays a role in DNA repair. It cleaves phosphodiester bonds at apurinic or apyrimidinic (AP) sites, generating a 3'-hydroxyl group and a 5'-terminal sugar phosphate. The protein is Probable endonuclease 4 (nfo) of Thermotoga neapolitana.